A 216-amino-acid polypeptide reads, in one-letter code: MMNKIHKNNRGVLIVISGPSGAGKGTICKALLEKHDDIFISVSATTRNPRVGEVDGVNYHFLTKEEFKQRIAEDDFLEHAEVYGNYYGTPKSSVEKMLDEGKNVILEIDIQGALKVKEKATDGVFIFILPPSMEELKQRIIKRGSETPESLMTRFKSAYKEINYVSKYNYAVVNDNVEDAVKKIEAILLAEKCRVDRLKENLLESKEDEMHEQLYD.

The Guanylate kinase-like domain occupies glycine 11–leucine 189. ATP is bound at residue glycine 18 to glycine 25.

Belongs to the guanylate kinase family.

Its subcellular location is the cytoplasm. It carries out the reaction GMP + ATP = GDP + ADP. Essential for recycling GMP and indirectly, cGMP. This chain is Guanylate kinase, found in Clostridium perfringens (strain SM101 / Type A).